Here is a 318-residue protein sequence, read N- to C-terminus: GTP cyclohydrolase MptA (318 aa).

The protein belongs to the GTP cyclohydrolase IV family. In terms of assembly, homodimer. Fe(2+) serves as cofactor.

The enzyme catalyses GTP + H2O = 7,8-dihydroneopterin 2',3'-cyclic phosphate + formate + diphosphate + H(+). Its pathway is cofactor biosynthesis; 5,6,7,8-tetrahydromethanopterin biosynthesis. Functionally, converts GTP to 7,8-dihydro-D-neopterin 2',3'-cyclic phosphate, the first intermediate in the biosynthesis of coenzyme methanopterin. The protein is GTP cyclohydrolase MptA of Methanosarcina acetivorans (strain ATCC 35395 / DSM 2834 / JCM 12185 / C2A).